A 384-amino-acid polypeptide reads, in one-letter code: BarH-like 2 homeobox protein (384 aa).

Disordered regions lie at residues 1-134, 154-235, and 364-384; these read MTAM…APRT, CAPY…ARTA, and PGGQ…PHPR. Composition is skewed to low complexity over residues 101 to 110 and 119 to 134; these read VPAQSLQPSP and QSAA…APRT. Polar residues predominate over residues 157–175; sequence YSTSVSSPHHTPKQESNAA. Basic and acidic residues predominate over residues 177-217; the sequence is ESFRPKLEQEDGKTKLDKREDPQSDIKCHGTKEEGDREITS. Positions 229–288 form a DNA-binding region, homeobox; it reads PRKARTAFSDHQLNQLERSFERQKYLSVQDRMDLAAALNLTDTQVKTWYQNRRTKWKRQT.

It belongs to the BAR homeobox family.

The protein localises to the nucleus. Potential regulator of neural basic helix-loop-helix genes. It may down-regulate expression of ASCL1 and, within the thalamus, up-regulate NGN2, thereby regulating distinct patterns of neuronal differentiation. The sequence is that of BarH-like 2 homeobox protein (Barhl2) from Mus musculus (Mouse).